A 536-amino-acid polypeptide reads, in one-letter code: Transcription factor cheR (536 aa).

The segment at residues 19 to 57 is a DNA-binding region (zn(2)-C6 fungal-type); it reads CDRCHRHKLRCERSSVIVNGGVAVPLGPCKRCLKACIPC. Disordered stretches follow at residues 70–122 and 220–243; these read AKTG…LSGT and ALTD…PREE. Positions 88-108 are enriched in low complexity; it reads AASPAKRAPSPARRPTASTPR.

Its subcellular location is the nucleus. Functionally, transcription factor; part of the gene cluster that mediates the biosynthesis of chaetoglobosin A which has a unique inhibitory activity against actin polymerization in mammalian cells. Chaetoglobosin A and its intermediates are involved in the morphological differentiation of C.globosum. Binds directly to asymmetric direct repeats present in the promoters of the chaetoglobosin A cluster genes. The polypeptide is Transcription factor cheR (Chaetomium globosum (strain ATCC 6205 / CBS 148.51 / DSM 1962 / NBRC 6347 / NRRL 1970) (Soil fungus)).